Reading from the N-terminus, the 338-residue chain is Arginine N-succinyltransferase subunit alpha (338 aa).

It belongs to the succinylarginine dihydrolase family. In terms of assembly, heterotetramer of two alpha and two beta subunits.

It catalyses the reaction succinyl-CoA + L-arginine = N(2)-succinyl-L-arginine + CoA + H(+). Its pathway is amino-acid degradation; L-arginine degradation via AST pathway; L-glutamate and succinate from L-arginine: step 1/5. Functionally, catalyzes the transfer of succinyl-CoA to arginine to produce N(2)-succinylarginine. Also acts on L-ornithine. This chain is Arginine N-succinyltransferase subunit alpha (astA), found in Pseudomonas aeruginosa (strain ATCC 15692 / DSM 22644 / CIP 104116 / JCM 14847 / LMG 12228 / 1C / PRS 101 / PAO1).